Consider the following 163-residue polypeptide: MPSFDIVSEVDLQEVRNAVENATRELASRWDFRNVEASVELNEKNETIKLTTISDFQVKQLVDILREKLVKRGIEAGALEIPEECEHSGKLYSVEAKLQKGIDSVMAKKLVKLIKDSKLKVQTQIQGEQLRVTGKSRDDLQGAMALVRGADLGQPFQFNNFRD.

This sequence belongs to the YajQ family.

Its function is as follows. Nucleotide-binding protein. The sequence is that of Nucleotide-binding protein NT01EI_1072 from Edwardsiella ictaluri (strain 93-146).